A 785-amino-acid chain; its full sequence is Endonuclease MutS2 (785 aa).

335 to 342 (GPNTGGKT) is an ATP binding site. The 76-residue stretch at 710 to 785 (LDLRGERYEN…GSGVTIVELK (76 aa)) folds into the Smr domain.

It belongs to the DNA mismatch repair MutS family. MutS2 subfamily. In terms of assembly, homodimer. Binds to stalled ribosomes, contacting rRNA.

Endonuclease that is involved in the suppression of homologous recombination and thus may have a key role in the control of bacterial genetic diversity. Functionally, acts as a ribosome collision sensor, splitting the ribosome into its 2 subunits. Detects stalled/collided 70S ribosomes which it binds and splits by an ATP-hydrolysis driven conformational change. Acts upstream of the ribosome quality control system (RQC), a ribosome-associated complex that mediates the extraction of incompletely synthesized nascent chains from stalled ribosomes and their subsequent degradation. Probably generates substrates for RQC. The chain is Endonuclease MutS2 from Bacillus velezensis (strain DSM 23117 / BGSC 10A6 / LMG 26770 / FZB42) (Bacillus amyloliquefaciens subsp. plantarum).